The following is a 79-amino-acid chain: UPF0154 protein SSP1415 (79 aa).

A helical transmembrane segment spans residues 4-24 (WLAIVLIVLALILGLVGGFFL).

Belongs to the UPF0154 family.

It is found in the membrane. This is UPF0154 protein SSP1415 from Staphylococcus saprophyticus subsp. saprophyticus (strain ATCC 15305 / DSM 20229 / NCIMB 8711 / NCTC 7292 / S-41).